Here is a 326-residue protein sequence, read N- to C-terminus: Glutaredoxin 3 (326 aa).

The 108-residue stretch at 1–108 (MANFTDAASL…LTNKVQRLGS (108 aa)) folds into the Thioredoxin domain. Glutaredoxin domains follow at residues 125–227 (NQRL…VSLE) and 227–326 (ENRL…KGEN). [2Fe-2S] cluster-binding residues include Cys-150 and Cys-252.

Homodimer; the homodimer is independent of 2Fe-2S clusters. Heterotrimer; forms a heterotrimeric complex composed by two bola2 molecules and one glrx3 molecule; linked by [2Fe-2S] clusters.

The protein resides in the cytoplasm. Its subcellular location is the cytosol. Its function is as follows. Together with bola2, acts as a cytosolic iron-sulfur (Fe-S) cluster assembly factor that facilitates [2Fe-2S] cluster insertion into a subset of cytosolic proteins. Required for hemoglobin maturation. Does not possess any thyoredoxin activity since it lacks the conserved motif that is essential for catalytic activity. The polypeptide is Glutaredoxin 3 (glrx3) (Danio rerio (Zebrafish)).